The primary structure comprises 543 residues: Periplasmic oligopeptide-binding protein OppA (543 aa).

A signal peptide spans 1 to 26 (MSNITKKSLIAAGILTALIAASAATA). Cysteines 297 and 443 form a disulfide.

The protein belongs to the bacterial solute-binding protein 5 family. In terms of assembly, the complex is composed of two ATP-binding proteins (OppD and OppF), two transmembrane proteins (OppB and OppC) and a solute-binding protein (OppA).

It is found in the periplasm. Functionally, part of the ABC transporter complex OppABCDF involved in the uptake of oligopeptides, including the cell wall murein tripeptide L-alanyl-gamma-D-glutamyl-meso-diaminopimelate. Plays an important nutritional role and is involved in the recycling of cell wall peptides. Binds peptides containing from two to five amino acid residues regardless of their sequence. Also binds cell wall peptides, such as L-alanyl-gamma-D-glutamyl-meso-diaminopimelate. The protein is Periplasmic oligopeptide-binding protein OppA of Salmonella typhimurium (strain LT2 / SGSC1412 / ATCC 700720).